The following is a 225-amino-acid chain: Ribosomal RNA small subunit methyltransferase G (225 aa).

S-adenosyl-L-methionine is bound by residues Gly69, 119-120 (AE), and Arg136.

This sequence belongs to the methyltransferase superfamily. RNA methyltransferase RsmG family.

It localises to the cytoplasm. Its function is as follows. Specifically methylates the N7 position of a guanine in 16S rRNA. This Pseudothermotoga lettingae (strain ATCC BAA-301 / DSM 14385 / NBRC 107922 / TMO) (Thermotoga lettingae) protein is Ribosomal RNA small subunit methyltransferase G.